The chain runs to 163 residues: Nucleotide-binding protein Asuc_2113 (163 aa).

This sequence belongs to the YajQ family.

Nucleotide-binding protein. The polypeptide is Nucleotide-binding protein Asuc_2113 (Actinobacillus succinogenes (strain ATCC 55618 / DSM 22257 / CCUG 43843 / 130Z)).